Consider the following 446-residue polypeptide: Xylose isomerase 1 (446 aa).

Catalysis depends on residues His109 and Asp112. Mg(2+) contacts are provided by Glu240, Glu276, His279, Asp304, Asp315, Asp317, and Asp347.

This sequence belongs to the xylose isomerase family. As to quaternary structure, homotetramer. It depends on Mg(2+) as a cofactor.

The protein resides in the cytoplasm. It catalyses the reaction alpha-D-xylose = alpha-D-xylulofuranose. In Xanthomonas campestris pv. campestris (strain 8004), this protein is Xylose isomerase 1.